The following is a 385-amino-acid chain: Probable threonine protease PRSS50 (385 aa).

The signal sequence occupies residues 1 to 39 (MGRWCQTVARGQRPRTSAPSRAGALLLLLLLLRSAGCWG). The Peptidase S1 domain maps to 93 to 358 (VSEGKVDPYR…YQHWIWDCLN (266 aa)). Asparagine 133 carries N-linked (GlcNAc...) asparagine glycosylation. Residues cysteine 138 and cysteine 154 are joined by a disulfide bond. Catalysis depends on charge relay system residues histidine 153 and aspartate 206. 3 disulfide bridges follow: cysteine 240–cysteine 316, cysteine 273–cysteine 296, and cysteine 306–cysteine 334. Asparagine 279 carries N-linked (GlcNAc...) asparagine glycosylation. Residue threonine 310 is the Charge relay system of the active site.

It belongs to the peptidase S1 family. In terms of tissue distribution, testis specific. Differentially expressed in some breast cancer tissues.

The protein localises to the endoplasmic reticulum. May be involved in proteolysis through its threonine endopeptidase activity. The chain is Probable threonine protease PRSS50 (PRSS50) from Homo sapiens (Human).